A 134-amino-acid chain; its full sequence is Profilin-5 (134 aa).

This sequence belongs to the profilin family. In terms of assembly, occurs in many kinds of cells as a complex with monomeric actin in a 1:1 ratio. In terms of tissue distribution, specifically expressed in mature pollen grains. Expressed in germinating pollen grains. Expressed in growing pollen tubes (at protein level).

It is found in the cytoplasm. The protein resides in the cytoskeleton. Its function is as follows. Binds to actin monomers and regulates the organization of the actin cytoskeleton. At high concentrations, profilin prevents the polymerization of actin, whereas it enhances it at low concentrations. At low concentrations, associates with the poly-proline motif of formins to enhance actin filament elongation rate. Acts redundantly with PRF4 to regulate apical actin polymerization at the tip of pollen tube and control polarized pollen tube growth. Functions probably by favoring formin-mediated actin polymerization at pollen tube tips. This Arabidopsis thaliana (Mouse-ear cress) protein is Profilin-5.